Here is a 350-residue protein sequence, read N- to C-terminus: Hydroxymethylglutaryl-CoA synthase (350 aa).

D30 serves as a coordination point for (3S)-3-hydroxy-3-methylglutaryl-CoA. Catalysis depends on E82, which acts as the Proton donor/acceptor. Positions 114, 155, 203, and 236 each coordinate (3S)-3-hydroxy-3-methylglutaryl-CoA. Residue C114 is the Acyl-thioester intermediate of the active site. H236 acts as the Proton donor/acceptor in catalysis. CoA is bound at residue R241. Residues R245, N268, and S298 each contribute to the (3S)-3-hydroxy-3-methylglutaryl-CoA site.

It belongs to the thiolase-like superfamily. Archaeal HMG-CoA synthase family. As to quaternary structure, interacts with acetoacetyl-CoA thiolase that catalyzes the precedent step in the pathway and with a DUF35 protein. The acetoacetyl-CoA thiolase/HMG-CoA synthase complex channels the intermediate via a fused CoA-binding site, which allows for efficient coupling of the endergonic thiolase reaction with the exergonic HMGCS reaction.

It carries out the reaction acetoacetyl-CoA + acetyl-CoA + H2O = (3S)-3-hydroxy-3-methylglutaryl-CoA + CoA + H(+). Its pathway is metabolic intermediate biosynthesis; (R)-mevalonate biosynthesis; (R)-mevalonate from acetyl-CoA: step 2/3. Functionally, catalyzes the condensation of acetyl-CoA with acetoacetyl-CoA to form 3-hydroxy-3-methylglutaryl-CoA (HMG-CoA). Functions in the mevalonate (MVA) pathway leading to isopentenyl diphosphate (IPP), a key precursor for the biosynthesis of isoprenoid compounds that are building blocks of archaeal membrane lipids. The chain is Hydroxymethylglutaryl-CoA synthase from Pyrobaculum aerophilum (strain ATCC 51768 / DSM 7523 / JCM 9630 / CIP 104966 / NBRC 100827 / IM2).